A 425-amino-acid chain; its full sequence is COP9 signalosome complex subunit 1 (425 aa).

The PCI domain maps to 219-379 (ASSGVPPEIY…KSKALQTLEN (161 aa)).

This sequence belongs to the CSN1 family. As to quaternary structure, component of the COP9 signalosome (CSN) complex.

The protein localises to the cytoplasm. The protein resides in the nucleus. In terms of biological role, component of the COP9 signalosome (CSN) complex that acts as an regulator of the ubiquitin (Ubl) conjugation pathway by mediating the deneddylation of the cullin subunit of SCF-type E3 ubiquitin-protein ligase complexes. The CSN complex is involved in the regulation of the circadian clock through its control of the stability of the SCF(FWD-1) complex. The polypeptide is COP9 signalosome complex subunit 1 (csn-1) (Neurospora crassa (strain ATCC 24698 / 74-OR23-1A / CBS 708.71 / DSM 1257 / FGSC 987)).